We begin with the raw amino-acid sequence, 312 residues long: Ribosomal protein L11 methyltransferase (312 aa).

4 residues coordinate S-adenosyl-L-methionine: Thr-160, Gly-181, Asp-203, and Asn-248.

Belongs to the methyltransferase superfamily. PrmA family.

The protein localises to the cytoplasm. It carries out the reaction L-lysyl-[protein] + 3 S-adenosyl-L-methionine = N(6),N(6),N(6)-trimethyl-L-lysyl-[protein] + 3 S-adenosyl-L-homocysteine + 3 H(+). Functionally, methylates ribosomal protein L11. This is Ribosomal protein L11 methyltransferase from Fusobacterium nucleatum subsp. nucleatum (strain ATCC 25586 / DSM 15643 / BCRC 10681 / CIP 101130 / JCM 8532 / KCTC 2640 / LMG 13131 / VPI 4355).